The following is a 101-amino-acid chain: uncharacterized protein (101 aa).

Positions 1–27 (MQLTGSIYPWFTAYALLKSTLMELINS) are cleaved as a signal peptide. A run of 2 helical transmembrane segments spans residues 42–64 (LVPY…AISF) and 79–98 (TFVF…NTFL).

The protein localises to the cytoplasm. The protein resides in the nucleus membrane. This is an uncharacterized protein from Schizosaccharomyces pombe (strain 972 / ATCC 24843) (Fission yeast).